Reading from the N-terminus, the 235-residue chain is Lipoprotein-releasing system ATP-binding protein LolD 1 (235 aa).

The region spanning 5–234 is the ABC transporter domain; sequence FEARGITKSY…DGRLQLCTPL (230 aa). An ATP-binding site is contributed by 42 to 49; sequence GASGSGKT.

It belongs to the ABC transporter superfamily. Lipoprotein translocase (TC 3.A.1.125) family. In terms of assembly, the complex is composed of two ATP-binding proteins (LolD) and two transmembrane proteins (LolC and LolE).

The protein localises to the cell inner membrane. Part of the ABC transporter complex LolCDE involved in the translocation of mature outer membrane-directed lipoproteins, from the inner membrane to the periplasmic chaperone, LolA. Responsible for the formation of the LolA-lipoprotein complex in an ATP-dependent manner. The sequence is that of Lipoprotein-releasing system ATP-binding protein LolD 1 from Chlorobium luteolum (strain DSM 273 / BCRC 81028 / 2530) (Pelodictyon luteolum).